The chain runs to 149 residues: 3-dehydroquinate dehydratase 2 (149 aa).

Tyrosine 24 (proton acceptor) is an active-site residue. Positions 75, 81, and 88 each coordinate substrate. Histidine 101 serves as the catalytic Proton donor. Substrate contacts are provided by residues 102–103 and arginine 112; that span reads LS.

The protein belongs to the type-II 3-dehydroquinase family. Homododecamer.

The catalysed reaction is 3-dehydroquinate = 3-dehydroshikimate + H2O. It functions in the pathway metabolic intermediate biosynthesis; chorismate biosynthesis; chorismate from D-erythrose 4-phosphate and phosphoenolpyruvate: step 3/7. In terms of biological role, catalyzes a trans-dehydration via an enolate intermediate. This Pseudomonas putida (strain ATCC 47054 / DSM 6125 / CFBP 8728 / NCIMB 11950 / KT2440) protein is 3-dehydroquinate dehydratase 2 (aroQ2).